The following is a 283-amino-acid chain: MLMDGKELARDIKVKIKAEIDNIKKIHNINPMVATILVGDDPASQVYLNSQVKSYQDLGIGVQKYFFSEEISEAYLLNLIDKLNKDTEVDGIMINLPLPPQINATKVLNSIKLIKDVDGFKAENLGLLFQNNEGFTSPSTPAGIMALIEKYNIDLEGKDVVVVGSSNIVGKPIAALILNSRGTVTICNIYTKNLAEKTKNADILISAVGKAKLITEDMVKEGAVVIDVGINRVNGKLEGDVDFENVQKKASHITPVPGGVGALTVAMLLSNILKSFKANRGII.

NADP(+) contacts are provided by residues Gly-164–Ser-166, Ile-189, and Ile-230.

This sequence belongs to the tetrahydrofolate dehydrogenase/cyclohydrolase family. As to quaternary structure, homodimer.

The enzyme catalyses (6R)-5,10-methylene-5,6,7,8-tetrahydrofolate + NADP(+) = (6R)-5,10-methenyltetrahydrofolate + NADPH. The catalysed reaction is (6R)-5,10-methenyltetrahydrofolate + H2O = (6R)-10-formyltetrahydrofolate + H(+). It functions in the pathway one-carbon metabolism; tetrahydrofolate interconversion. In terms of biological role, catalyzes the oxidation of 5,10-methylenetetrahydrofolate to 5,10-methenyltetrahydrofolate and then the hydrolysis of 5,10-methenyltetrahydrofolate to 10-formyltetrahydrofolate. The chain is Bifunctional protein FolD from Fusobacterium nucleatum subsp. nucleatum (strain ATCC 25586 / DSM 15643 / BCRC 10681 / CIP 101130 / JCM 8532 / KCTC 2640 / LMG 13131 / VPI 4355).